An 89-amino-acid chain; its full sequence is UPF0335 protein Nham_1221 (89 aa).

It belongs to the UPF0335 family.

The protein is UPF0335 protein Nham_1221 of Nitrobacter hamburgensis (strain DSM 10229 / NCIMB 13809 / X14).